The chain runs to 414 residues: Protein ABHD18 (414 aa).

A signal peptide spans 1–24 (MGVSKLDILYRRLLLTKLFIRGWG). N-linked (GlcNAc...) asparagine glycans are attached at residues N282 and N307.

The protein belongs to the AB hydrolase superfamily.

The protein resides in the secreted. The sequence is that of Protein ABHD18 from Homo sapiens (Human).